A 436-amino-acid polypeptide reads, in one-letter code: GTPase Der (436 aa).

EngA-type G domains lie at 4–167 (PIVA…PDEA) and 175–351 (IRFS…DNHR). Residues 10 to 17 (GRPNVGKS), 57 to 61 (DTGGI), 119 to 122 (NKVD), 181 to 188 (GRPNVGKS), 229 to 233 (DTAGM), and 294 to 297 (NKWD) each bind GTP. Positions 352-436 (KRITSSTLND…PIKLIVRARK (85 aa)) constitute a KH-like domain.

This sequence belongs to the TRAFAC class TrmE-Era-EngA-EngB-Septin-like GTPase superfamily. EngA (Der) GTPase family. In terms of assembly, associates with the 50S ribosomal subunit.

Functionally, GTPase that plays an essential role in the late steps of ribosome biogenesis. This chain is GTPase Der, found in Leuconostoc mesenteroides subsp. mesenteroides (strain ATCC 8293 / DSM 20343 / BCRC 11652 / CCM 1803 / JCM 6124 / NCDO 523 / NBRC 100496 / NCIMB 8023 / NCTC 12954 / NRRL B-1118 / 37Y).